The sequence spans 282 residues: MSSYANHQALAGLTLGKSTDYRDTYDASLLQGVPRSLNRDPLGLKADNLPFHGTDIWTLYELSWLNAKGLPQVAVGHVELDYTSVNLIESKSFKLYLNSFNQTRFNNWDEVRQTLERDLSTCAQGKISVALYRLDELEGQPIGHFNGTCIDDQDITIDNYEFTTDYLENATCGEKVVEETLVSHLLKSNCLITHQPDWGSIQIQYRGRQIDREKLLRYLVSFRHHNEFHEQCVERIFNDLLRFCQPEKLSVYARYTRRGGLDINPWRSNSDFVPSTTRLVRQ.

Substrate is bound at residue 88–90; it reads IES. 90-91 contacts NADPH; sequence SK. Cysteine 190 acts as the Thioimide intermediate in catalysis. The active-site Proton donor is the aspartate 197. 229 to 230 lines the substrate pocket; it reads HE. An NADPH-binding site is contributed by 258 to 259; that stretch reads RG.

The protein belongs to the GTP cyclohydrolase I family. QueF type 2 subfamily. As to quaternary structure, homodimer.

It is found in the cytoplasm. It carries out the reaction 7-aminomethyl-7-carbaguanine + 2 NADP(+) = 7-cyano-7-deazaguanine + 2 NADPH + 3 H(+). Its pathway is tRNA modification; tRNA-queuosine biosynthesis. Catalyzes the NADPH-dependent reduction of 7-cyano-7-deazaguanine (preQ0) to 7-aminomethyl-7-deazaguanine (preQ1). The protein is NADPH-dependent 7-cyano-7-deazaguanine reductase of Escherichia coli O9:H4 (strain HS).